The following is a 188-amino-acid chain: Elongation factor P (188 aa).

It belongs to the elongation factor P family.

Its subcellular location is the cytoplasm. Its pathway is protein biosynthesis; polypeptide chain elongation. Its function is as follows. Involved in peptide bond synthesis. Stimulates efficient translation and peptide-bond synthesis on native or reconstituted 70S ribosomes in vitro. Probably functions indirectly by altering the affinity of the ribosome for aminoacyl-tRNA, thus increasing their reactivity as acceptors for peptidyl transferase. The protein is Elongation factor P of Sulfurimonas denitrificans (strain ATCC 33889 / DSM 1251) (Thiomicrospira denitrificans (strain ATCC 33889 / DSM 1251)).